We begin with the raw amino-acid sequence, 112 residues long: MKIKERLANQRKAINKTQAQMADEIGISLTSYKKYESGEGLPTMENLVKIADALEISIDELCGRWATDENQELMLRLKKIQQLDEEEQKAISMVLESMLIRHSTKSILNHGA.

An HTH cro/C1-type domain is found at 7–61 (LANQRKAINKTQAQMADEIGISLTSYKKYESGEGLPTMENLVKIADALEISIDEL). A DNA-binding region (H-T-H motif) is located at residues 18-37 (QAQMADEIGISLTSYKKYES).

In terms of biological role, transcriptional repressor of the integrated CTXPhi phage gene rstA2. This is Cryptic phage CTXphi transcriptional repressor RstR (rstR1) from Vibrio cholerae serotype O1 (strain ATCC 39315 / El Tor Inaba N16961).